The sequence spans 408 residues: Peptidase T (408 aa).

H78 contacts Zn(2+). Residue D80 is part of the active site. Zn(2+) is bound at residue D140. The active-site Proton acceptor is E174. Residues E175, D197, and H379 each contribute to the Zn(2+) site.

Belongs to the peptidase M20B family. Zn(2+) is required as a cofactor.

The protein localises to the cytoplasm. It catalyses the reaction Release of the N-terminal residue from a tripeptide.. Cleaves the N-terminal amino acid of tripeptides. The chain is Peptidase T from Staphylococcus aureus (strain bovine RF122 / ET3-1).